The sequence spans 579 residues: Keratinocyte proline-rich protein (579 aa).

Serine 394 is modified (phosphoserine). A disordered region spans residues 526–579 (EAPYCGPSSYNQGQESGAGCGPGDVFPERRGQDGHGDQGNAFAGVKGEAKSAYF). A compositionally biased stretch (basic and acidic residues) spans 551–561 (FPERRGQDGHG).

As to expression, expressed in the upper layer of epidermis and psoriasis (at protein level). Expressed in the upper layer of epidermis and psoriasis.

It is found in the cytoplasm. This Homo sapiens (Human) protein is Keratinocyte proline-rich protein (KPRP).